Reading from the N-terminus, the 547-residue chain is Ganoderic acid synthetase CYP5150L8 (547 aa).

The chain crosses the membrane as a helical span at residues 2-22; it reads PDSSLVLVAIAGAAYIFWLVF. Residue C487 participates in heme binding.

Belongs to the cytochrome P450 family. It depends on heme as a cofactor.

Its subcellular location is the membrane. It carries out the reaction lanosterol + reduced [NADPH--hemoprotein reductase] + O2 = 26-hydroxylanosterol + oxidized [NADPH--hemoprotein reductase] + H2O + H(+). The enzyme catalyses 26-hydroxylanosterol + reduced [NADPH--hemoprotein reductase] + O2 = 26-oxolanosterol + oxidized [NADPH--hemoprotein reductase] + 2 H2O + H(+). The catalysed reaction is 26-oxolanosterol + reduced [NADPH--hemoprotein reductase] + O2 = 3beta-hydroxy-lanosta-8, 24-dien-26-oate + oxidized [NADPH--hemoprotein reductase] + H2O + 2 H(+). Its pathway is secondary metabolite biosynthesis; terpenoid biosynthesis. Functionally, cytochrome P450 monooxygenase that is involved in the biosynthesis of ganoderic acids (GA), a group of highly oxygenated lanostane-type triterpenoids which well recognized as a main group of unique bioactive compounds in the medicinal mushroom Ganoderma lucidum. CYP5150L8 alone is able to catalyze the three-step oxidations at C-26 from lanosterol to 3-hydroxy-lanosta-8,24-dien-26-oic acid (also called ganoderic acid Z or HLDOA). The methyl group of lanosterol at C-26 is first oxidized into hydroxyl group to form 3-hydroxy-lanosta-8,24-dien-26-ol (HLDO). The hydroxyl group at C-26 of HLDO is further converted into a formyl group to form 3-hydroxy-lanosta-8,24-dien-26-al (HLDA). Finally, the formyl group is oxidized into a carboxyl group to produce 3-hydroxy-lanosta-8,24-dien-26-oic acid (HLDOA). The chain is Ganoderic acid synthetase CYP5150L8 from Ganoderma lucidum (Ling zhi medicinal fungus).